Consider the following 629-residue polypeptide: 1-deoxy-D-xylulose-5-phosphate synthase (629 aa).

Thiamine diphosphate-binding positions include His72 and 113–115; that span reads GHS. Position 144 (Asp144) interacts with Mg(2+). Thiamine diphosphate contacts are provided by residues 145 to 146, Asn173, Tyr284, and Glu366; that span reads GA. A Mg(2+)-binding site is contributed by Asn173.

Belongs to the transketolase family. DXPS subfamily. As to quaternary structure, homodimer. Requires Mg(2+) as cofactor. Thiamine diphosphate serves as cofactor.

The enzyme catalyses D-glyceraldehyde 3-phosphate + pyruvate + H(+) = 1-deoxy-D-xylulose 5-phosphate + CO2. It functions in the pathway metabolic intermediate biosynthesis; 1-deoxy-D-xylulose 5-phosphate biosynthesis; 1-deoxy-D-xylulose 5-phosphate from D-glyceraldehyde 3-phosphate and pyruvate: step 1/1. In terms of biological role, catalyzes the acyloin condensation reaction between C atoms 2 and 3 of pyruvate and glyceraldehyde 3-phosphate to yield 1-deoxy-D-xylulose-5-phosphate (DXP). This is 1-deoxy-D-xylulose-5-phosphate synthase from Halalkalibacterium halodurans (strain ATCC BAA-125 / DSM 18197 / FERM 7344 / JCM 9153 / C-125) (Bacillus halodurans).